Reading from the N-terminus, the 309-residue chain is Homoserine kinase (309 aa).

91-101 (PIGSGLGSSAC) contacts ATP.

It belongs to the GHMP kinase family. Homoserine kinase subfamily.

Its subcellular location is the cytoplasm. It carries out the reaction L-homoserine + ATP = O-phospho-L-homoserine + ADP + H(+). Its pathway is amino-acid biosynthesis; L-threonine biosynthesis; L-threonine from L-aspartate: step 4/5. In terms of biological role, catalyzes the ATP-dependent phosphorylation of L-homoserine to L-homoserine phosphate. This Photorhabdus laumondii subsp. laumondii (strain DSM 15139 / CIP 105565 / TT01) (Photorhabdus luminescens subsp. laumondii) protein is Homoserine kinase.